The primary structure comprises 293 residues: MMRIALFLLTNLAVMVVFGLVLSLTGIQSSSVTGLLIMALLFGFGGSIVSLLMSKWMALKSVGGEVIEAPRNETERWLMDTVAQQSRQAGIAMPQVAIYHAPDINAFATGARRDASLVAVSTGLLQNMSRDEAEAVIAHEISHIANGDMVTMTLIQGVVNTFVIFISRIIAQVAAGFLGGNRDEGEESNGNPLIYFAVATVLELVFGILASIITMWFSRYREFHADAGSAKLVGREKMIAALQRLKTSYEPQEASSMMAFCINGKSKSLSELFMTHPPLDKRIEALRSGEYLK.

The next 2 helical transmembrane spans lie at 4–24 (IALFLLTNLAVMVVFGLVLSL) and 32–52 (VTGLLIMALLFGFGGSIVSLL). Residue His139 participates in Zn(2+) binding. Residue Glu140 is part of the active site. His143 provides a ligand contact to Zn(2+). Helical transmembrane passes span 158–178 (VVNTFVIFISRIIAQVAAGFL) and 193–213 (LIYFAVATVLELVFGILASII). Position 222 (Glu222) interacts with Zn(2+).

The protein belongs to the peptidase M48B family. The cofactor is Zn(2+).

It localises to the cell inner membrane. The chain is Protease HtpX from Cronobacter sakazakii (strain ATCC BAA-894) (Enterobacter sakazakii).